A 217-amino-acid chain; its full sequence is Probable GTP-binding protein EngB (217 aa).

The EngB-type G domain occupies 32–205; it reads GTPQIAFAGR…RKIVYSLIET (174 aa). GTP-binding positions include 40–47, 67–71, 85–88, 152–155, and 184–186; these read GRSNAGKS, GKTKL, DLPG, TKID, and VSN. The Mg(2+) site is built by Ser47 and Thr69.

The protein belongs to the TRAFAC class TrmE-Era-EngA-EngB-Septin-like GTPase superfamily. EngB GTPase family. Mg(2+) is required as a cofactor.

Functionally, necessary for normal cell division and for the maintenance of normal septation. The chain is Probable GTP-binding protein EngB from Leptospira interrogans serogroup Icterohaemorrhagiae serovar copenhageni (strain Fiocruz L1-130).